Here is a 352-residue protein sequence, read N- to C-terminus: Biotin synthase (352 aa).

One can recognise a Radical SAM core domain in the interval 44–262 (NRVQVSTLLS…LAVARILMPQ (219 aa)). [4Fe-4S] cluster-binding residues include C59, C63, and C66. Residues C103, C134, C194, and R266 each contribute to the [2Fe-2S] cluster site.

It belongs to the radical SAM superfamily. Biotin synthase family. As to quaternary structure, homodimer. The cofactor is [4Fe-4S] cluster. [2Fe-2S] cluster serves as cofactor.

It catalyses the reaction (4R,5S)-dethiobiotin + (sulfur carrier)-SH + 2 reduced [2Fe-2S]-[ferredoxin] + 2 S-adenosyl-L-methionine = (sulfur carrier)-H + biotin + 2 5'-deoxyadenosine + 2 L-methionine + 2 oxidized [2Fe-2S]-[ferredoxin]. It participates in cofactor biosynthesis; biotin biosynthesis; biotin from 7,8-diaminononanoate: step 2/2. Functionally, catalyzes the conversion of dethiobiotin (DTB) to biotin by the insertion of a sulfur atom into dethiobiotin via a radical-based mechanism. The protein is Biotin synthase of Pseudomonas savastanoi pv. phaseolicola (strain 1448A / Race 6) (Pseudomonas syringae pv. phaseolicola (strain 1448A / Race 6)).